A 395-amino-acid chain; its full sequence is Acid ceramidase (395 aa).

An N-terminal signal peptide occupies residues 1 to 21 (MLGRSRLALVLLAAAVSCAVA). A disulfide bond links Cys-31 and Cys-340. Cys-143 (nucleophile) is an active-site residue. N-linked (GlcNAc...) asparagine glycosylation is found at Asn-173, Asn-195, Asn-259, Asn-286, Asn-342, and Asn-348. Cys-388 and Cys-392 are disulfide-bonded.

Belongs to the acid ceramidase family. As to quaternary structure, heterodimer; disulfide-linked. The heterodimer is composed of the disulfide-linked alpha and beta chains produced by autocatalytic cleavage of the precursor. Post-translationally, N-glycosylated. Proteolytically cleaved into two chains alpha and beta that remain associated via a disulfide bond. Cleavage gives rise to a conformation change that activates the enzyme. The same catalytic Cys residue mediates the autoproteolytic cleavage and subsequent hydrolysis of lipid substrates. The beta chain may undergo an additional C-terminal processing.

Its subcellular location is the lysosome. It localises to the secreted. The enzyme catalyses an N-acylsphing-4-enine + H2O = sphing-4-enine + a fatty acid. It carries out the reaction N-dodecanoylsphing-4-enine + H2O = dodecanoate + sphing-4-enine. The catalysed reaction is N-tetradecanoylsphing-4-enine + H2O = tetradecanoate + sphing-4-enine. It catalyses the reaction N-hexadecanoylsphing-4-enine + H2O = sphing-4-enine + hexadecanoate. The enzyme catalyses N-octadecanoylsphing-4-enine + H2O = sphing-4-enine + octadecanoate. It carries out the reaction N-dodecanoyl-(4R)-hydroxysphinganine + H2O = (4R)-hydroxysphinganine + dodecanoate. The catalysed reaction is N-(dodecanoyl)-sphinganine + H2O = dodecanoate + sphinganine. It catalyses the reaction N-(acetyl)-sphing-4-enine + H2O = sphing-4-enine + acetate. The enzyme catalyses N-(hexanoyl)sphing-4-enine + H2O = hexanoate + sphing-4-enine. It carries out the reaction N-octanoylsphing-4-enine + H2O = octanoate + sphing-4-enine. The catalysed reaction is N-(9Z-octadecenoyl)-sphing-4-enine + H2O = sphing-4-enine + (9Z)-octadecenoate. It catalyses the reaction N-dodecanoylethanolamine + H2O = dodecanoate + ethanolamine. It participates in lipid metabolism; sphingolipid metabolism. Its function is as follows. Lysosomal ceramidase that hydrolyzes sphingolipid ceramides into sphingosine and free fatty acids at acidic pH. Ceramides, sphingosine, and its phosphorylated form sphingosine-1-phosphate are bioactive lipids that mediate cellular signaling pathways regulating several biological processes including cell proliferation, apoptosis and differentiation. Has a higher catalytic efficiency towards C12-ceramides versus other ceramides. Also catalyzes the reverse reaction allowing the synthesis of ceramides from fatty acids and sphingosine. For the reverse synthetic reaction, the natural sphingosine D-erythro isomer is more efficiently utilized as a substrate compared to D-erythro-dihydrosphingosine and D-erythro-phytosphingosine, while the fatty acids with chain lengths of 12 or 14 carbons are the most efficiently used. Also has an N-acylethanolamine hydrolase activity. By regulating the levels of ceramides, sphingosine and sphingosine-1-phosphate in the epidermis, mediates the calcium-induced differentiation of epidermal keratinocytes. Also indirectly regulates tumor necrosis factor/TNF-induced apoptosis. By regulating the intracellular balance between ceramides and sphingosine, in adrenocortical cells, probably also acts as a regulator of steroidogenesis. This chain is Acid ceramidase, found in Macaca fascicularis (Crab-eating macaque).